We begin with the raw amino-acid sequence, 523 residues long: UDP-N-acetylmuramyl-tripeptide synthetase (523 aa).

Residue Ser-38 participates in UDP-N-acetyl-alpha-D-muramoyl-L-alanyl-D-glutamate binding. An ATP-binding site is contributed by 116–122 (GTKGKTT). UDP-N-acetyl-alpha-D-muramoyl-L-alanyl-D-glutamate contacts are provided by residues 162–163 (TT), Ser-189, and Arg-197. Position 231 is an N6-carboxylysine (Lys-231).

It belongs to the MurCDEF family. MurE subfamily. Post-translationally, carboxylation is probably crucial for Mg(2+) binding and, consequently, for the gamma-phosphate positioning of ATP.

It is found in the cytoplasm. It functions in the pathway cell wall biogenesis; peptidoglycan biosynthesis. Functionally, catalyzes the addition of an amino acid to the nucleotide precursor UDP-N-acetylmuramoyl-L-alanyl-D-glutamate (UMAG) in the biosynthesis of bacterial cell-wall peptidoglycan. The polypeptide is UDP-N-acetylmuramyl-tripeptide synthetase (Lactobacillus acidophilus (strain ATCC 700396 / NCK56 / N2 / NCFM)).